Consider the following 243-residue polypeptide: Pyridoxine 5'-phosphate synthase (243 aa).

Residue asparagine 9 coordinates 3-amino-2-oxopropyl phosphate. Residue 11-12 (DH) coordinates 1-deoxy-D-xylulose 5-phosphate. Arginine 20 lines the 3-amino-2-oxopropyl phosphate pocket. The active-site Proton acceptor is the histidine 45. Residues arginine 47 and histidine 52 each contribute to the 1-deoxy-D-xylulose 5-phosphate site. Glutamate 72 functions as the Proton acceptor in the catalytic mechanism. Threonine 102 contributes to the 1-deoxy-D-xylulose 5-phosphate binding site. The active-site Proton donor is histidine 193. Residues glycine 194 and 215-216 (GH) contribute to the 3-amino-2-oxopropyl phosphate site.

This sequence belongs to the PNP synthase family. In terms of assembly, homooctamer; tetramer of dimers.

Its subcellular location is the cytoplasm. The catalysed reaction is 3-amino-2-oxopropyl phosphate + 1-deoxy-D-xylulose 5-phosphate = pyridoxine 5'-phosphate + phosphate + 2 H2O + H(+). It functions in the pathway cofactor biosynthesis; pyridoxine 5'-phosphate biosynthesis; pyridoxine 5'-phosphate from D-erythrose 4-phosphate: step 5/5. Its function is as follows. Catalyzes the complicated ring closure reaction between the two acyclic compounds 1-deoxy-D-xylulose-5-phosphate (DXP) and 3-amino-2-oxopropyl phosphate (1-amino-acetone-3-phosphate or AAP) to form pyridoxine 5'-phosphate (PNP) and inorganic phosphate. The polypeptide is Pyridoxine 5'-phosphate synthase (Shigella dysenteriae serotype 1 (strain Sd197)).